Consider the following 346-residue polypeptide: Probable WRKY transcription factor 54 (346 aa).

A disordered region spans residues 109–130 (PVSCNGGDSGESKKKRLGVGKG). The segment covering 121 to 130 (KKKRLGVGKG) has biased composition (basic residues). Residues 146-214 (VEAKSSEDRY…YIGYHTCTAN (69 aa)) constitute a DNA-binding region (WRKY). Over residues 267–282 (VKEEQNNNGDQSKDYY) the composition is skewed to basic and acidic residues. Residues 267 to 286 (VKEEQNNNGDQSKDYYEGSS) are disordered.

Belongs to the WRKY group III family. In terms of assembly, interacts with WRKY30. Binds to BZR2/BES1 to cooperatively regulate the expression of target genes. Interacts with ASK7/BIN2. Post-translationally, phosphorylated and destabilized by ASK7/BIN2. In terms of tissue distribution, expressed in leaves.

Its subcellular location is the nucleus. Its function is as follows. Transcription factor. Interacts specifically with the W box (5'-(T)TGAC[CT]-3'), a frequently occurring elicitor-responsive cis-acting element. Together with WRKY70, negative regulator of developmental senescence, probably via the regulation of several senescence-associated markers genes. Positive regulator of EDS1-dependent defense against E.amylovora. In collaboration with WRKY70, prevents stomatal closure and, consequently, osmotic stress tolerance. Together with WRKY46 and WRKY70, promotes brassinosteroid (BR)-regulated plant growth but prevent drought response by modulating gene expression. Negative regulator of SA biosynthesis. Prevents defense response to the necrotrophic pathogens P.carotovorum and B.cinerea, but promotes defense against biotrophic/hemibiotrophic pathogens P.syringae pv. tomato (Pst) DC3000, probably by regulating negatively the jasmonic acid (JA)/ethylene (ET) and positively the salicylic acid (SA) signaling pathways. This chain is Probable WRKY transcription factor 54, found in Arabidopsis thaliana (Mouse-ear cress).